The following is a 481-amino-acid chain: Proline--tRNA ligase (481 aa).

The protein belongs to the class-II aminoacyl-tRNA synthetase family. ProS type 3 subfamily. Homodimer.

The protein localises to the cytoplasm. It carries out the reaction tRNA(Pro) + L-proline + ATP = L-prolyl-tRNA(Pro) + AMP + diphosphate. Catalyzes the attachment of proline to tRNA(Pro) in a two-step reaction: proline is first activated by ATP to form Pro-AMP and then transferred to the acceptor end of tRNA(Pro). In Chlorobium phaeobacteroides (strain DSM 266 / SMG 266 / 2430), this protein is Proline--tRNA ligase.